Here is a 937-residue protein sequence, read N- to C-terminus: Bifunctional glutamine synthetase adenylyltransferase/adenylyl-removing enzyme (937 aa).

An adenylyl removase region spans residues 1–436 (MSQPIPSASP…AAEFAELLAP (436 aa)). The tract at residues 443 to 937 (PDTLADYWRA…QLRFQPGKGA (495 aa)) is adenylyl transferase.

The protein belongs to the GlnE family. The cofactor is Mg(2+).

It carries out the reaction [glutamine synthetase]-O(4)-(5'-adenylyl)-L-tyrosine + phosphate = [glutamine synthetase]-L-tyrosine + ADP. It catalyses the reaction [glutamine synthetase]-L-tyrosine + ATP = [glutamine synthetase]-O(4)-(5'-adenylyl)-L-tyrosine + diphosphate. Involved in the regulation of glutamine synthetase GlnA, a key enzyme in the process to assimilate ammonia. When cellular nitrogen levels are high, the C-terminal adenylyl transferase (AT) inactivates GlnA by covalent transfer of an adenylyl group from ATP to specific tyrosine residue of GlnA, thus reducing its activity. Conversely, when nitrogen levels are low, the N-terminal adenylyl removase (AR) activates GlnA by removing the adenylyl group by phosphorolysis, increasing its activity. The regulatory region of GlnE binds the signal transduction protein PII (GlnB) which indicates the nitrogen status of the cell. The polypeptide is Bifunctional glutamine synthetase adenylyltransferase/adenylyl-removing enzyme (Xanthomonas campestris pv. campestris (strain ATCC 33913 / DSM 3586 / NCPPB 528 / LMG 568 / P 25)).